The chain runs to 222 residues: 3-demethoxyubiquinol 3-hydroxylase (222 aa).

Fe cation is bound by residues glutamate 71, glutamate 101, histidine 104, glutamate 153, glutamate 185, and histidine 188.

Belongs to the COQ7 family. It depends on Fe cation as a cofactor.

It localises to the cell membrane. The catalysed reaction is a 5-methoxy-2-methyl-3-(all-trans-polyprenyl)benzene-1,4-diol + AH2 + O2 = a 3-demethylubiquinol + A + H2O. It functions in the pathway cofactor biosynthesis; ubiquinone biosynthesis. In terms of biological role, catalyzes the hydroxylation of 2-nonaprenyl-3-methyl-6-methoxy-1,4-benzoquinol during ubiquinone biosynthesis. The polypeptide is 3-demethoxyubiquinol 3-hydroxylase (Bordetella pertussis (strain Tohama I / ATCC BAA-589 / NCTC 13251)).